We begin with the raw amino-acid sequence, 754 residues long: uncharacterized protein (754 aa).

Residues 1–110 form a disordered region; that stretch reads MNKGQNQVVP…RNMLGSLQKT (110 aa). Polar residues predominate over residues 15–25; the sequence is FGGQNPPQLSS. The segment covering 26-35 has biased composition (low complexity); it reads IPPIVNPVVV. Residues 36–46 are compositionally biased toward polar residues; it reads QNRTSPGTPFI. The span at 49–60 shows a compositional bias: basic and acidic residues; that stretch reads KAKEIYNRRQQE. The segment covering 62-72 has biased composition (acidic residues); it reads ISSDSEEEESP. A compositionally biased stretch (basic and acidic residues) spans 76–93; it reads AKSKYSRDSRDSRDTRDS.

The protein resides in the virion. This is an uncharacterized protein from Acanthamoeba polyphaga mimivirus (APMV).